Here is a 654-residue protein sequence, read N- to C-terminus: Probable potassium transport system protein Kup (654 aa).

The next 13 helical transmembrane spans lie at 17–37 (GILV…LYVM), 40–60 (IIGL…AIFW), 71–91 (VLIT…LYAL), 99–119 (WLII…IITP), 137–157 (INTV…QQFG), 164–184 (FFAP…ILQI), 202–222 (LLSI…CTTG), 240–260 (ISWI…GAYL), 281–301 (LVMP…AAVI), 338–358 (IYIP…VLHF), 369–389 (GLAI…FMIL), 394–414 (WFII…FLIA), and 423–443 (GYVT…WYTA).

The protein belongs to the HAK/KUP transporter (TC 2.A.72) family.

Its subcellular location is the cell inner membrane. The enzyme catalyses K(+)(in) + H(+)(in) = K(+)(out) + H(+)(out). Its function is as follows. Transport of potassium into the cell. Likely operates as a K(+):H(+) symporter. The chain is Probable potassium transport system protein Kup from Flavobacterium psychrophilum (strain ATCC 49511 / DSM 21280 / CIP 103535 / JIP02/86).